The primary structure comprises 195 residues: Keratin-associated protein 4-11 (195 aa).

27 consecutive repeat copies span residues 5-9 (CCGSV), 24-28 (CCRPS), 29-33 (CCETT), 34-38 (CCRTT), 44-48 (CCVSS), 49-53 (CCRPQ), 54-58 (CCQSV), 59-63 (CCQPT), 64-68 (CCRPR), 69-73 (CCISS), 74-78 (CCRPS), 79-83 (CCVSS), 84-88 (CCKPQ), 89-93 (CCQSM), 94-98 (CCQPT), 99-103 (CCRPR), 104-108 (CCISS), 109-113 (CCRPS), 114-118 (CCVSS), 119-123 (CCRPQ), 124-128 (CCQSV), 129-133 (CCQPT), 134-138 (CCHPS), 144-148 (CCRPS), 149-153 (CCESS), 154-158 (CCRPC), and 159-163 (CCLRP). The segment at 5–163 (CCGSVCSHQG…CCRPCCCLRP (159 aa)) is 27 X 5 AA repeats of C-C-[GIKRQVHEL]-[SPTR]-[STVQRMC].

It belongs to the KRTAP type 4 family. As to quaternary structure, interacts with hair keratins. Expressed in the hair follicles.

In terms of biological role, in the hair cortex, hair keratin intermediate filaments are embedded in an interfilamentous matrix, consisting of hair keratin-associated proteins (KRTAP), which are essential for the formation of a rigid and resistant hair shaft through their extensive disulfide bond cross-linking with abundant cysteine residues of hair keratins. The matrix proteins include the high-sulfur and high-glycine-tyrosine keratins. The polypeptide is Keratin-associated protein 4-11 (KRTAP4-11) (Homo sapiens (Human)).